We begin with the raw amino-acid sequence, 360 residues long: Nucleoporin SEH1 (360 aa).

WD repeat units follow at residues 10–49 (DHKDLIHDVSFDFHGRRMATCSSDQSVKVWDKSESGDWHC), 55–96 (THSG…SNDK), 111–152 (DSRT…NLSQ), 160–210 (SCKL…RKYA), 217–258 (TVTD…KELT), and 276–315 (NHNSQVWRVSWNITGTVLASSGDDGCVRLWKANYMDNWKC). Residue lysine 12 forms a Glycyl lysine isopeptide (Lys-Gly) (interchain with G-Cter in SUMO2) linkage. 2 positions are modified to phosphoserine: serine 179 and serine 190. The span at 324 to 354 (SPVNGSSQQGTSNPSLGSNIPSLQNSLNGSS) shows a compositional bias: polar residues. Residues 324–360 (SPVNGSSQQGTSNPSLGSNIPSLQNSLNGSSAGRKHS) are disordered.

This sequence belongs to the WD repeat SEC13 family. In terms of assembly, component of the Nup107-160 subcomplex of the nuclear pore complex (NPC). The Nup107-160 subcomplex includes NUP160, NUP133, NUP107, NUP98, NUP85, NUP43, NUP37, SEH1 and SEC13. The SEH1 subunit appears to be only weakly associated with the Nup107-160 subcomplex. Component of the GATOR2 subcomplex, composed of MIOS, SEC13, SEH1L, WDR24 and WDR59. The GATOR2 complex interacts with CASTOR1 and CASTOR2; the interaction is negatively regulated by arginine. The GATOR2 complex interacts with SESN1, SESN2 and SESN3; the interaction is negatively regulated by amino acids. SESN1, SESN2 and SESN3 convey leucine availability via direct interaction with SEH1L and WDR24.

The protein resides in the chromosome. It is found in the centromere. The protein localises to the kinetochore. Its subcellular location is the nucleus. It localises to the nuclear pore complex. The protein resides in the lysosome membrane. Its activity is regulated as follows. The GATOR2 complex is negatively regulated by the upstream amino acid sensors CASTOR1 and SESN2, which sequester the GATOR2 complex in absence of amino acids. In the presence of abundant amino acids, GATOR2 is released from CASTOR1 and SESN2 and activated. Functionally, component of the Nup107-160 subcomplex of the nuclear pore complex (NPC). The Nup107-160 subcomplex is required for the assembly of a functional NPC. The Nup107-160 subcomplex is also required for normal kinetochore microtubule attachment, mitotic progression and chromosome segregation. This subunit plays a role in recruitment of the Nup107-160 subcomplex to the kinetochore. Its function is as follows. As a component of the GATOR2 complex, functions as an activator of the amino acid-sensing branch of the mTORC1 signaling pathway. The GATOR2 complex indirectly activates mTORC1 through the inhibition of the GATOR1 subcomplex. GATOR2 probably acts as an E3 ubiquitin-protein ligase toward GATOR1. In the presence of abundant amino acids, the GATOR2 complex mediates ubiquitination of the NPRL2 core component of the GATOR1 complex, leading to GATOR1 inactivation. In the absence of amino acids, GATOR2 is inhibited, activating the GATOR1 complex. Within the GATOR2 complex, SEC13 and SEH1L are required to stabilize the complex. The polypeptide is Nucleoporin SEH1 (SEH1L) (Pongo abelii (Sumatran orangutan)).